The chain runs to 379 residues: Tryptophan 2,3-dioxygenase (379 aa).

Residues 57–61 and R128 each bind substrate; that span reads FIITH. H312 serves as a coordination point for heme. A substrate-binding site is contributed by T327.

It belongs to the tryptophan 2,3-dioxygenase family. Homotetramer. Dimer of dimers. It depends on heme as a cofactor.

The enzyme catalyses L-tryptophan + O2 = N-formyl-L-kynurenine. Its pathway is amino-acid degradation; L-tryptophan degradation via kynurenine pathway; L-kynurenine from L-tryptophan: step 1/2. It functions in the pathway pigment biosynthesis; ommochrome biosynthesis. In terms of biological role, heme-dependent dioxygenase that catalyzes the oxidative cleavage of the L-tryptophan (L-Trp) pyrrole ring and converts L-tryptophan to N-formyl-L-kynurenine. Catalyzes the oxidative cleavage of the indole moiety. Required during larval growth to control the level of potentially harmful free tryptophan in the hemolymph. In the adult the same reaction is the first step in the ommochrome biosynthetic pathway. The polypeptide is Tryptophan 2,3-dioxygenase (Drosophila melanogaster (Fruit fly)).